The following is a 434-amino-acid chain: MTVRRALALAALALAVSPALAAQERPTIVVGSPDFRPLPIAVAAFQGEGDAGAAATQTAEVVRADLVLSGLFDVLDPRGFLADPSEGFAAPSIRFARWADVGADGLAKARVRRGPAGLEGELHLYEVRAGREVLVKLLRVDGADARSLAHRMADEIVRYYTREPGIFATRIAAIRRGRGTWELVTQDMDGGNQQVLLSERSILMSPAWRPDGREILVTSYRSGRPELWAYRFSDRAFRPLGRHRNAFGGVYSPDGSRIAFTVSEGNVTDLWVMSADGAGARKLTSDPAIDVSPTWSPDGRRIAFVSDRSGTPQIYVMGADGSGARRLTFQGNYNQTPQWSPRGDLIAFTARDERKVFDVFVVSPDSGAINRITQDQGRTNEEPSWAPNGRLMIFRTDRNGGIQLVVSDARGDRQTPVTSGKTDLAAPAWGPLAP.

Positions 1–21 (MTVRRALALAALALAVSPALA) are cleaved as a signal peptide. Residues 411 to 434 (GDRQTPVTSGKTDLAAPAWGPLAP) are disordered.

It belongs to the TolB family. In terms of assembly, the Tol-Pal system is composed of five core proteins: the inner membrane proteins TolA, TolQ and TolR, the periplasmic protein TolB and the outer membrane protein Pal. They form a network linking the inner and outer membranes and the peptidoglycan layer.

It is found in the periplasm. Part of the Tol-Pal system, which plays a role in outer membrane invagination during cell division and is important for maintaining outer membrane integrity. The polypeptide is Tol-Pal system protein TolB (Anaeromyxobacter dehalogenans (strain 2CP-1 / ATCC BAA-258)).